The chain runs to 307 residues: tRNA dimethylallyltransferase (307 aa).

7-14 is a binding site for ATP; that stretch reads GPTAGGKT. Position 9 to 14 (9 to 14) interacts with substrate; sequence TAGGKT. The segment at 32-35 is interaction with substrate tRNA; it reads DSRQ.

This sequence belongs to the IPP transferase family. Monomer. The cofactor is Mg(2+).

It catalyses the reaction adenosine(37) in tRNA + dimethylallyl diphosphate = N(6)-dimethylallyladenosine(37) in tRNA + diphosphate. Functionally, catalyzes the transfer of a dimethylallyl group onto the adenine at position 37 in tRNAs that read codons beginning with uridine, leading to the formation of N6-(dimethylallyl)adenosine (i(6)A). The protein is tRNA dimethylallyltransferase of Elusimicrobium minutum (strain Pei191).